The primary structure comprises 440 residues: MNLISRTLTRAVSSSLYHSKAAKLPTQKWIISQQIRVFSATVISGGGKKPLAKVSVKPPLNVATEKESTPPKKIEYKPEISNWINLIGFVEQPVQFGPCSDGKFWAGTVISQRSGSKSSNFWIPIIFEGDLAKIAVQHVKKEDRIHVSGKLFIDSPPPNVTYSQSNVQVMVQNLNFVQAATSTTKTISPPEKEVTSIKKKPARSKKVKVIDEETSNSWKHLIENPKEWLDHRGNKANGLVKPGHPDFKMKVGGLSLWLSTAPDWALLKLEELKFDVLVPKGNIKLNQLKGEESWKDLVQNPDKWLDNRSDKTNVKYPDFKHKETGEALWMTNSPIWVLSKLPPLKKNQERPFMSNKVSQLELDVEVPKGNLKQLKREEIWKNLVENPSKWWDNRLDKRNPKGPDFKHKETGEALWIGDSPTWALSKLPPLKKNQERPVMA.

A chloroplast and mitochondrion-targeting transit peptide spans 1–61 (MNLISRTLTR…AKVSVKPPLN (61 aa)). An SSB domain is found at 80-178 (ISNWINLIGF…VMVQNLNFVQ (99 aa)). PDF region stretches follow at residues 218-270 (WKHL…LKLE), 294-342 (WKDL…SKLP), and 380-428 (WKNL…SKLP).

Expressed primarily in the female gametophyte and in the floral abscission zone.

It localises to the mitochondrion. The protein localises to the plastid. Its subcellular location is the chloroplast. Functionally, binds single-stranded DNA. In Arabidopsis thaliana (Mouse-ear cress), this protein is Protein OSB3, chloroplastic/mitochondrial (OSB3).